Here is a 230-residue protein sequence, read N- to C-terminus: NAD(P)H-quinone oxidoreductase subunit K, chloroplastic (230 aa).

Positions 43, 44, 108, and 139 each coordinate [4Fe-4S] cluster.

The protein belongs to the complex I 20 kDa subunit family. NDH is composed of at least 16 different subunits, 5 of which are encoded in the nucleus. It depends on [4Fe-4S] cluster as a cofactor.

The protein localises to the plastid. The protein resides in the chloroplast thylakoid membrane. It catalyses the reaction a plastoquinone + NADH + (n+1) H(+)(in) = a plastoquinol + NAD(+) + n H(+)(out). It carries out the reaction a plastoquinone + NADPH + (n+1) H(+)(in) = a plastoquinol + NADP(+) + n H(+)(out). Functionally, NDH shuttles electrons from NAD(P)H:plastoquinone, via FMN and iron-sulfur (Fe-S) centers, to quinones in the photosynthetic chain and possibly in a chloroplast respiratory chain. The immediate electron acceptor for the enzyme in this species is believed to be plastoquinone. Couples the redox reaction to proton translocation, and thus conserves the redox energy in a proton gradient. The polypeptide is NAD(P)H-quinone oxidoreductase subunit K, chloroplastic (Lotus japonicus (Lotus corniculatus var. japonicus)).